Consider the following 233-residue polypeptide: Large ribosomal subunit protein eL6y (233 aa).

Basic and acidic residues predominate over residues 48–72 (HDAKSKVDAPVEKPPKFYPAEDVKK). A disordered region spans residues 48–82 (HDAKSKVDAPVEKPPKFYPAEDVKKPLPNRRTAKP).

This sequence belongs to the eukaryotic ribosomal protein eL6 family.

This is Large ribosomal subunit protein eL6y (RPL6B) from Arabidopsis thaliana (Mouse-ear cress).